Reading from the N-terminus, the 3063-residue chain is Collagen alpha-1(XII) chain (3063 aa).

An N-terminal signal peptide occupies residues 1–23 (MRSRLPPALAALGAALLLSSIEA). The Fibronectin type-III 1 domain maps to 27–117 (PPSDLNFKII…GQLTIQTGSS (91 aa)). Residues 140-316 (DLVFLVDGSW…DIQNEIISQV (177 aa)) form the VWFA 1 domain. An O-linked (Xyl...) (chondroitin sulfate) serine glycan is attached at serine 329. The 91-residue stretch at 336–426 (PPSNLIAMEV…SIMEKTQPMK (91 aa)) folds into the Fibronectin type-III 2 domain. Residues 440-616 (DIVFLVDGSY…RISFELTQSI (177 aa)) enclose the VWFA 2 domain. Fibronectin type-III domains lie at 634–722 (PPKD…TEEV), 725–816 (APRN…VRGN), 817–905 (PRDL…LEER), 907–998 (SPQD…LSQD), 999–1087 (SKTL…ASRF), and 1089–1179 (SPRN…TLSD). The N-linked (GlcNAc...) asparagine glycan is linked to asparagine 700. Serine 798 carries an O-linked (Xyl...) (chondroitin sulfate) serine glycan. The disordered stretch occupies residues 799-830 (GPGTPLTGNAATEEVRGNPRDLRVSDPTTSTM). A compositionally biased stretch (basic and acidic residues) spans 811 to 822 (EEVRGNPRDLRV). A Cell attachment site motif is present at residues 862–864 (RGD). Serine 889 and serine 981 each carry an O-linked (Xyl...) (chondroitin sulfate) serine glycan. Residues 1077-1099 (RQGSGTTASRFKSPRNLKTSDPT) form a disordered region. The span at 1079–1099 (GSGTTASRFKSPRNLKTSDPT) shows a compositional bias: polar residues. The VWFA 3 domain maps to 1199–1371 (DIVLLVDGSW…ESLSRIVDDL (173 aa)). Fibronectin type-III domains follow at residues 1387 to 1476 (APSN…LPVP), 1477 to 1567 (VVSL…LPLP), 1568 to 1658 (RPQD…VPAP), 1659 to 1754 (TNLK…APKS), 1755 to 1849 (GPRN…TVRN), 1850 to 1935 (LRVY…LMRG), 1936 to 2026 (LARN…LPRS), 2027 to 2117 (GPRN…VGLL), 2118 to 2206 (PPQN…LYLN), and 2207 to 2294 (VTDL…TVKP). Asparagine 1763 carries N-linked (GlcNAc...) asparagine glycosylation. The N-linked (GlcNAc...) asparagine glycan is linked to asparagine 2206. Residues 2283 to 2312 (GVSVKEHTTVKPTEAPTEPPTPPPPPTIPP) are disordered. Residues 2299–2311 (TEPPTPPPPPTIP) are compositionally biased toward pro residues. Residues 2323 to 2496 (DIVFLTDASW…ESFEKIEDNL (174 aa)) enclose the VWFA 4 domain. Positions 2451-2746 (SGFSVFVVGV…NSCTCTQDSV (296 aa)) are nonhelical region (NC3). The Laminin G-like domain occupies 2520 to 2712 (GFKMLEAYNL…IQSFDIVCSP (193 aa)). N-linked (GlcNAc...) asparagine glycans are attached at residues asparagine 2528 and asparagine 2679. 2 disordered regions span residues 2743–2896 (QDSV…GDRG) and 2932–3063 (NDYQ…PGSG). 4 consecutive Collagen-like domains span residues 2747-2798 (GPPG…GPNG), 2802-2852 (PGEQ…AMGP), 2853-2898 (RGPP…RGDI), and 2941-2990 (PGPP…GERG). Positions 2747–2898 (GPPGPPGPAG…KGEKGDRGDI (152 aa)) are triple-helical region (COL2) with 1 imperfection. The short motif at 2779-2781 (RGD) is the Cell attachment site element. Over residues 2784-2794 (PPGPQGPPGPQ) the composition is skewed to pro residues. Positions 2817–2826 (PGLPGRTGTP) are enriched in low complexity. 2 stretches are compositionally biased toward pro residues: residues 2828–2837 (LPGPPGPMGP) and 2853–2862 (RGPPGPPGSP). Over residues 2864 to 2874 (SPGVTGPSGKP) the composition is skewed to low complexity. The Cell attachment site signature appears at 2895–2897 (RGD). The tract at residues 2899–2941 (ASQNMMRAVARQVCEQLISGQMNRFNQMLNQIPNDYQSSRNQP) is nonhelical region (NC2). The span at 2941 to 2950 (PGPPGPPGPP) shows a compositional bias: pro residues. Residues 2942–3044 (GPPGPPGPPG…RGPPGPPGYC (103 aa)) form a triple-helical region (COL1) with 2 imperfections region. 14 positions are modified to 4-hydroxyproline: proline 2944, proline 2947, proline 2950, proline 2959, proline 2965, proline 2968, proline 2971, proline 2983, proline 3000, proline 3003, proline 3014, proline 3023, proline 3026, and proline 3029. The span at 2957 to 2966 (GEPGPGGRPG) shows a compositional bias: gly residues. The segment covering 3006–3020 (QGESRTGPPGSTGSR) has biased composition (low complexity). Positions 3045 to 3063 (DSSQCASIPYNGQGYPGSG) are nonhelical region (NC1).

Belongs to the fibril-associated collagens with interrupted helices (FACIT) family. Trimer of identical chains each containing 190 kDa of non-triple-helical sequences. The triple-helical tail is stabilized by disulfide bonds at each end. In terms of processing, hydroxylation on proline residues within the sequence motif, GXPG, is most likely to be 4-hydroxy as this fits the requirement for 4-hydroxylation in vertebrates. Post-translationally, isoform 1 O-glycosylation; glycosaminoglycan of chondroitin-sulfate type. As to expression, found in collagen I-containing tissues: both isoform 1 and isoform 2 appear in amnion, chorion, skeletal muscle, small intestine, and in cell culture of dermal fibroblasts, keratinocytes and endothelial cells. Only isoform 2 is found in lung, placenta, kidney and a squamous cell carcinoma cell line. Isoform 1 is also present in the corneal epithelial Bowman's membrane (BM) and the interfibrillar matrix of the corneal stroma, but it is not detected in the limbal BM.

Its subcellular location is the secreted. It localises to the extracellular space. It is found in the extracellular matrix. Type XII collagen interacts with type I collagen-containing fibrils, the COL1 domain could be associated with the surface of the fibrils, and the COL2 and NC3 domains may be localized in the perifibrillar matrix. The protein is Collagen alpha-1(XII) chain (COL12A1) of Homo sapiens (Human).